The sequence spans 387 residues: 3-ketoacyl-CoA thiolase (387 aa).

Cys91 (acyl-thioester intermediate) is an active-site residue. Residues His343 and Cys373 each act as proton acceptor in the active site.

The protein belongs to the thiolase-like superfamily. Thiolase family. As to quaternary structure, heterotetramer of two alpha chains (FadB) and two beta chains (FadA).

It is found in the cytoplasm. The enzyme catalyses an acyl-CoA + acetyl-CoA = a 3-oxoacyl-CoA + CoA. Its pathway is lipid metabolism; fatty acid beta-oxidation. Catalyzes the final step of fatty acid oxidation in which acetyl-CoA is released and the CoA ester of a fatty acid two carbons shorter is formed. This chain is 3-ketoacyl-CoA thiolase, found in Klebsiella pneumoniae subsp. pneumoniae (strain ATCC 700721 / MGH 78578).